The following is a 47-amino-acid chain: Large ribosomal subunit protein bL34 (47 aa).

The protein belongs to the bacterial ribosomal protein bL34 family.

The protein is Large ribosomal subunit protein bL34 (rpmH) of Mycolicibacterium smegmatis (strain ATCC 700084 / mc(2)155) (Mycobacterium smegmatis).